We begin with the raw amino-acid sequence, 306 residues long: Palmitoyl-protein thioesterase 1 (306 aa).

Positions 1–27 are cleaved as a signal peptide; the sequence is MASSSCLWLLALAFLLGSCASLALGHL. 3 disulfide bridges follow: cysteine 45–cysteine 46, cysteine 96–cysteine 128, and cysteine 152–cysteine 160. The active site involves serine 115. Residues asparagine 197, asparagine 212, and asparagine 232 are each glycosylated (N-linked (GlcNAc...) asparagine). Catalysis depends on residues aspartate 233 and histidine 289.

It belongs to the palmitoyl-protein thioesterase family. Interacts with CLN5, ATP5F1A and ATP5F1B. In terms of processing, glycosylated. As to expression, spleen, brain, seminal vesicle, and testis. Lower levels of activity in liver, heart, lung, and skeletal muscle.

It is found in the lysosome. It localises to the secreted. The protein resides in the golgi apparatus. Its subcellular location is the endoplasmic reticulum. It carries out the reaction S-hexadecanoyl-L-cysteinyl-[protein] + H2O = L-cysteinyl-[protein] + hexadecanoate + H(+). The enzyme catalyses hexadecanoyl-CoA + H2O = hexadecanoate + CoA + H(+). It catalyses the reaction S-hexadecanoyl-N-acetylcysteamine + H2O = N-acetylcysteamine + hexadecanoate + H(+). The catalysed reaction is S-hexadecanoyl-N-acetylcysteine methyl ester + H2O = N-acetylcysteine methyl ester + hexadecanoate + H(+). Its activity is regulated as follows. Palmitoylation reduces PPT1 enzymatic activity. Functionally, has thioesterase activity against fatty acid thioesters with 14 -18 carbons, including palmitoyl-CoA, S-palmitoyl-N-acetylcysteamine, and palmitoylated proteins. In contrast to PPT2, PPT1 can hydrolyze palmitoylated proteins and palmitoylcysteine. The sequence is that of Palmitoyl-protein thioesterase 1 (PPT1) from Bos taurus (Bovine).